A 25-amino-acid polypeptide reads, in one-letter code: Chitinolytic alpha-amylase inhibitor PvCAI (25 aa).

As to quaternary structure, homodimer.

The catalysed reaction is Random endo-hydrolysis of N-acetyl-beta-D-glucosaminide (1-&gt;4)-beta-linkages in chitin and chitodextrins.. Its function is as follows. Alpha-amylase inhibitor, active against Z.subfasciatus alpha-amylase (ZSA) but not porcine pancreatic alpha-amylase (PPA). Has chitinase activity. This is Chitinolytic alpha-amylase inhibitor PvCAI from Phaseolus vulgaris (Kidney bean).